A 452-amino-acid polypeptide reads, in one-letter code: MITLKEALKLSNEEIKDLRAQLEARIIKERELGAYVEQLTGLPLSKLGEGVPIAIKDNIQIKGWSVTSGSKILQGYIAPYNATAIEKLLARNLAAFGRTNMDEFAMGSTTESSFYGHTLNPLNHAHVPGGSSGGSAAAVAGGIAIAALGSDTGGSIRQPAAFCGCVGFKPTYGRVSRYGLAAYSSSLDQIGPIAQNVEDAAILYDIIAGHDEKDSTSADVAFSSVADKINGERKLNICVIENYVNNASEDTKKALNSAIDKLKNFGHKIVYKNLEDSKYDVAAYYIIATAEASANLSRYDGVRYGRRAEAKNLKELYVNSRSEGFGEEVKRRILLGTFVLSSGYYDAYYIKAQKARAHIKAQYEKILDEADLIFMPVSPTTAPKFGLMSDPLQAYLSDIYTISVNLAGLPAISVPIAKDGQNLNISAQLIAKAWDEQTLIDGAKSLENLIKG.

Catalysis depends on charge relay system residues Lys56 and Ser131. Ser155 functions as the Acyl-ester intermediate in the catalytic mechanism.

The protein belongs to the amidase family. GatA subfamily. As to quaternary structure, heterotrimer of A, B and C subunits.

It catalyses the reaction L-glutamyl-tRNA(Gln) + L-glutamine + ATP + H2O = L-glutaminyl-tRNA(Gln) + L-glutamate + ADP + phosphate + H(+). Allows the formation of correctly charged Gln-tRNA(Gln) through the transamidation of misacylated Glu-tRNA(Gln) in organisms which lack glutaminyl-tRNA synthetase. The reaction takes place in the presence of glutamine and ATP through an activated gamma-phospho-Glu-tRNA(Gln). The polypeptide is Glutamyl-tRNA(Gln) amidotransferase subunit A (Campylobacter curvus (strain 525.92)).